The primary structure comprises 314 residues: Protein phosphatase PTC7 homolog fig (314 aa).

In terms of domain architecture, PPM-type phosphatase spans 43-309; the sequence is PYLVTVVQGR…DDITLILSSV (267 aa). Aspartate 87, glycine 88, and aspartate 232 together coordinate Mn(2+).

It belongs to the PP2C family. Requires Mg(2+) as cofactor. It depends on Mn(2+) as a cofactor.

It carries out the reaction O-phospho-L-seryl-[protein] + H2O = L-seryl-[protein] + phosphate. The catalysed reaction is O-phospho-L-threonyl-[protein] + H2O = L-threonyl-[protein] + phosphate. The protein is Protein phosphatase PTC7 homolog fig of Drosophila melanogaster (Fruit fly).